Consider the following 321-residue polypeptide: MASANHPESGSISGYDHGSRRILIVTGLSGAGKSSILRVLEDLGHEVVDNPPLNLIQALASRAGQNLAIGIDVRSRGFEASRVLEELERLRLLPDCSVQLLYATAEPEILLRRFTATRRRHPLVTSGTILPGIEQETALLAPLRANADLVIDTSDLPSPELRQLIETRFGSTGGEGLTVALMSFAYPSGLPREADMVFDARFLRNPHYDPTLQPMTGLDEAVVQYVKSDPAYPAFFGHIQSLLELVLPRFVAEGKKYATIAIGCSGGRHRSVTIVEELARILPKTVPVGPMMVLHRELARKGLASWRWAVPPQDPSQDTTV.

Residue 27-34 (GLSGAGKS) participates in ATP binding. GTP is bound at residue 72 to 75 (DVRS).

The protein belongs to the RapZ-like family.

Its function is as follows. Displays ATPase and GTPase activities. The polypeptide is Nucleotide-binding protein GOX0815 (Gluconobacter oxydans (strain 621H) (Gluconobacter suboxydans)).